A 206-amino-acid polypeptide reads, in one-letter code: Ribonuclease HII (206 aa).

The RNase H type-2 domain maps to 14–206 (EFICGIDEVG…FKLRQLGEKV (193 aa)). A divalent metal cation contacts are provided by D20, E21, and D117.

This sequence belongs to the RNase HII family. Mn(2+) serves as cofactor. Mg(2+) is required as a cofactor.

It is found in the cytoplasm. The catalysed reaction is Endonucleolytic cleavage to 5'-phosphomonoester.. Endonuclease that specifically degrades the RNA of RNA-DNA hybrids. This Chlorobium chlorochromatii (strain CaD3) protein is Ribonuclease HII.